The following is a 313-amino-acid chain: uncharacterized protein (313 aa).

29–61 (ALVTGGGTGLGKAIATTFAHLGASVAIAARRLD) contacts NADP(+).

Belongs to the short-chain dehydrogenases/reductases (SDR) family. 2,4-dienoyl-CoA reductase subfamily.

This is an uncharacterized protein from Caenorhabditis elegans.